The following is an 888-amino-acid chain: E3 ubiquitin-protein ligase SH3RF1 (888 aa).

Residues 12–53 form an RING-type zinc finger; the sequence is CPVCLERLDASAKVLPCQHTFCKRCLLGIVGSRNELRCPECR. SH3 domains follow at residues 134 to 193 and 196 to 259; these read PQLP…IIKP and QPPP…FNSA. The tract at residues 275 to 321 is disordered; that stretch reads DAGECSSAAAQSSTAPKHSDTKKNTKKRHSFTSLTMANKSSQASQNR. The interval 292 to 362 is interaction with RAC1; it reads HSDTKKNTKK…APSQVHISTT (71 aa). Serine 304 is subject to Phosphoserine. Positions 305–321 are enriched in polar residues; that stretch reads FTSLTMANKSSQASQNR. The tract at residues 440-543 is interaction with AKT2; sequence HLRPQTRPSV…STAGGPAQKL (104 aa). The SH3 3 domain occupies 445–506; that stretch reads TRPSVYVAIY…PGNYVAPVTR (62 aa). Disordered stretches follow at residues 516 to 549, 617 to 637, and 693 to 741; these read VPMS…NGVA, SPAS…APLM, and PDSA…ASPT. Positions 520–535 are enriched in polar residues; it reads TAGQTSRGVTMVSPST. A Phosphoserine modification is found at serine 532. Polar residues predominate over residues 693-704; sequence PDSASLACGNSS. A compositionally biased stretch (basic and acidic residues) spans 707–718; that stretch reads KPDKDSKKEKKG. Residue serine 735 is modified to Phosphoserine. The SH3 4 domain occupies 829–888; sequence VVCERHRVVVSYPPQSEAELELKEGDIVFVHKKREDGWFKGTLQRNGKTGLFPGSFVENI.

The protein belongs to the SH3RF family. As to quaternary structure, interacts with HERP1. Interacts with RAC1; in a GTP-dependent manner. Interacts with MAP3K10/MLK2 and MAP3K11/MLK3. Interacts with MAPK8IP; this interaction leads to the PJAC complex (POSH-JIP or SH3RF1/MAPK8IP apoptotic complex) with a 1:1 ratio. Interacts with SIAH1. Probably part of a signaling complex that may contain SH3RF1, MAPK8IP, DLK1, MAP2K4/MKK4, MAP2K7/MKK7, MAPK8/JNK1, MAPK9/JNK2, AKT1 and AKT2. Found in a complex with RAC2, MAP3K7/TAK1, MAP2K7/MKK7, MAPK8IP1/JIP1, MAPK8/JNK1 and MAPK9/JNK2. Found in a complex with RAC1, MAP3K11/MLK3, MAP2K7/MKK7, MAPK8IP1/JIP1 and MAPK8/JNK1. Interacts with SH3RF2. In terms of processing, phosphorylated at Ser-304 by AKT1 and AKT2. When phosphorylated, it has reduced ability to bind Rac. Autoubiquitinated. Ubiquitinated by SH3RF2, leading to proteasome-mediated degradation.

It localises to the cytoplasm. The protein resides in the perinuclear region. It is found in the cell projection. Its subcellular location is the lamellipodium. The protein localises to the golgi apparatus. It localises to the trans-Golgi network. It catalyses the reaction S-ubiquitinyl-[E2 ubiquitin-conjugating enzyme]-L-cysteine + [acceptor protein]-L-lysine = [E2 ubiquitin-conjugating enzyme]-L-cysteine + N(6)-ubiquitinyl-[acceptor protein]-L-lysine.. It participates in protein modification; protein ubiquitination. In terms of biological role, has E3 ubiquitin-protein ligase activity. In the absence of an external substrate, it can catalyze self-ubiquitination. Stimulates ubiquitination of potassium channel KCNJ1, enhancing it's dynamin-dependent and clathrin-independent endocytosis. Acts as a scaffold protein that coordinates with MAPK8IP1/JIP1 in organizing different components of the JNK pathway, including RAC1 or RAC2, MAP3K11/MLK3 or MAP3K7/TAK1, MAP2K7/MKK7, MAPK8/JNK1 and/or MAPK9/JNK2 into a functional multiprotein complex to ensure the effective activation of the JNK signaling pathway. Regulates the differentiation of CD4(+) and CD8(+) T-cells and promotes T-helper 1 (Th1) cell differentiation. Regulates the activation of MAPK8/JNK1 and MAPK9/JNK2 in CD4(+) T-cells and the activation of MAPK8/JNK1 in CD8(+) T-cells. Controls proper cortical neuronal migration and the formation of proximal cytoplasmic dilation in the leading process (PCDLP) in migratory neocortical neurons by regulating the proper localization of activated RAC1 and F-actin assembly. This is E3 ubiquitin-protein ligase SH3RF1 (SH3RF1) from Pongo abelii (Sumatran orangutan).